The following is a 476-amino-acid chain: MVRGTKRRRSSAEKPIVVVPVTRDDTMPVDEDLVVGESQCAASKPFAKLVGVRRGISSIDLADDHFVCGRGSDDAPTNFNFSQVAKDVGLYRFISKIQFSIDRDTETRRIYLHDHSRNGTLVNQEMIGKGLSRELMNGDLISIGIPALIIFVYESADADHHPEELTKKYHVTSHSLGKGGFGKVLLGYKKSDRSVVAIKQLNTQFSTRCSRAIAKTRDIRNEVEVMKKLSHPNIVAIYDWITVAKYSYMVIEYVGGGEFFSKVVDSKYNRMGLGESLGKYFAFQLIDAILYLHSVGICHRDIKPENILCSDKAERCILKLTDFGMAKNSVNRMKTRCGTPSYNAPEIVANEGVEYTPKVDIWSLGCVLFITFSGYPPFSEEYTDMTMDEQVLTGRLIFHAQWRRITVETQNMIKWMLTVEPSNRPSAVELMSTQWMKCADCRTAKQDILKSIKPISAAAPAALQTTQAGPVKKAKM.

In terms of domain architecture, FHA spans 66–127 (FVCGRGSDDA…NGTLVNQEMI (62 aa)). The Protein kinase domain maps to 170 to 436 (HVTSHSLGKG…AVELMSTQWM (267 aa)). ATP contacts are provided by residues 177–184 (GKGGFGKV), Lys-199, and 252–258 (EYVGGGE). Residue Asp-301 is the Proton acceptor of the active site. ATP contacts are provided by residues 305–306 (EN) and Asp-322.

This sequence belongs to the protein kinase superfamily. CAMK Ser/Thr protein kinase family. CHK2 subfamily. It depends on Mg(2+) as a cofactor. In terms of tissue distribution, highly expressed in germline tissue.

It localises to the nucleus. The catalysed reaction is L-seryl-[protein] + ATP = O-phospho-L-seryl-[protein] + ADP + H(+). The enzyme catalyses L-threonyl-[protein] + ATP = O-phospho-L-threonyl-[protein] + ADP + H(+). Serine/threonine-protein kinase which is required for checkpoint-mediated cell cycle arrest, activation of DNA repair and apoptosis in response to the presence of DNA double-strand breaks. May also negatively regulate cell cycle progression during unperturbed cell cycles. Phosphorylates and inhibits cdc25 phosphatase, preventing entry into mitosis. Required for nuclear reorganization and homologous chromosome pairing during meiotic prophase. This chain is Serine/threonine-protein kinase chk-2 (chk-2), found in Caenorhabditis elegans.